Consider the following 232-residue polypeptide: RNA chaperone ProQ (232 aa).

Positions 105–182 (EAKARVQAQR…REEQHTPVSD (78 aa)) are disordered. Residues 117–136 (QQAKKREAAAAAGEKEDAPR) are compositionally biased toward basic and acidic residues. The span at 137–146 (RERKPRPTTP) shows a compositional bias: basic residues. Residues 147 to 177 (RRKEGAERKPRSQKPVEKAPKTVKAPREEQH) show a composition bias toward basic and acidic residues.

This sequence belongs to the ProQ family.

It is found in the cytoplasm. RNA chaperone with significant RNA binding, RNA strand exchange and RNA duplexing activities. May regulate ProP activity through an RNA-based, post-transcriptional mechanism. The chain is RNA chaperone ProQ from Escherichia coli (strain UTI89 / UPEC).